The primary structure comprises 387 residues: Large ribosomal subunit protein uL3 (387 aa).

A Phosphoserine modification is found at serine 24. Lysine 39 participates in a covalent cross-link: Glycyl lysine isopeptide (Lys-Gly) (interchain with G-Cter in ubiquitin). The residue at position 103 (threonine 103) is a Phosphothreonine. A Glycyl lysine isopeptide (Lys-Gly) (interchain with G-Cter in ubiquitin) cross-link involves residue lysine 136. Serine 156 carries the phosphoserine modification. Histidine 243 is modified (pros-methylhistidine). Residue serine 297 is modified to Phosphoserine.

It belongs to the universal ribosomal protein uL3 family. Component of the large ribosomal subunit (LSU). Mature yeast ribosomes consist of a small (40S) and a large (60S) subunit. The 40S small subunit contains 1 molecule of ribosomal RNA (18S rRNA) and 33 different proteins (encoded by 57 genes). The large 60S subunit contains 3 rRNA molecules (25S, 5.8S and 5S rRNA) and 46 different proteins (encoded by 81 genes). uL3 forms together with ES39L one of the contact sites for the signal recognition particle that targets ribosomes to the endoplasmic reticulum membrane. In terms of processing, methylation at His-243 by HPM1 is required for proper 60S subunit assembly and promotes translational elongation fidelity.

Its subcellular location is the cytoplasm. In terms of biological role, component of the ribosome, a large ribonucleoprotein complex responsible for the synthesis of proteins in the cell. The small ribosomal subunit (SSU) binds messenger RNAs (mRNAs) and translates the encoded message by selecting cognate aminoacyl-transfer RNA (tRNA) molecules. The large subunit (LSU) contains the ribosomal catalytic site termed the peptidyl transferase center (PTC), which catalyzes the formation of peptide bonds, thereby polymerizing the amino acids delivered by tRNAs into a polypeptide chain. The nascent polypeptides leave the ribosome through a tunnel in the LSU and interact with protein factors that function in enzymatic processing, targeting, and the membrane insertion of nascent chains at the exit of the ribosomal tunnel. uL3 plays a role in coordinating processes of accommodating the aminoacyl-tRNA in the PTC. The chain is Large ribosomal subunit protein uL3 from Saccharomyces cerevisiae (strain ATCC 204508 / S288c) (Baker's yeast).